Here is a 417-residue protein sequence, read N- to C-terminus: Phosphoglycerate kinase, cytosolic (417 aa).

(2R)-3-phosphoglycerate is bound by residues valine 23, aspartate 24, phenylalanine 25, asparagine 26, arginine 39, serine 61, histidine 62, glycine 64, arginine 65, arginine 132, histidine 168, and arginine 169. ADP-binding residues include glycine 214 and alanine 215. Glycine 214 contributes to the CDP binding site. Positions 215 and 216 each coordinate AMP. Residue alanine 215 coordinates ATP. Mg(2+) is bound at residue alanine 215. Lysine 216 is a (2R)-3-phosphoglycerate binding site. Aspartate 219 contacts CDP. Aspartate 219 provides a ligand contact to Mg(2+). Lysine 220 and glycine 238 together coordinate ADP. Lysine 220 lines the AMP pocket. Residue lysine 220 participates in ATP binding. Glycine 238 provides a ligand contact to CDP. 2 residues coordinate AMP: alanine 239 and alanine 311. 2 residues coordinate ATP: alanine 239 and alanine 311. The ADP site is built by alanine 311 and asparagine 335. CDP contacts are provided by glycine 336 and phenylalanine 341. Positions 341, 342, 374, and 375 each coordinate ADP. Glutamate 342 provides a ligand contact to AMP. The ATP site is built by glutamate 342, aspartate 374, and threonine 375. Aspartate 374 is a binding site for Mg(2+).

Belongs to the phosphoglycerate kinase family. Monomer. Requires Mg(2+) as cofactor.

The protein localises to the cytoplasm. It carries out the reaction (2R)-3-phosphoglycerate + ATP = (2R)-3-phospho-glyceroyl phosphate + ADP. It functions in the pathway carbohydrate degradation; glycolysis; pyruvate from D-glyceraldehyde 3-phosphate: step 2/5. This Leishmania mexicana protein is Phosphoglycerate kinase, cytosolic (PGKB).